Here is a 347-residue protein sequence, read N- to C-terminus: Protein RecA (347 aa).

67-74 contacts ATP; the sequence is GPESSGKT.

It belongs to the RecA family.

It is found in the cytoplasm. Its function is as follows. Can catalyze the hydrolysis of ATP in the presence of single-stranded DNA, the ATP-dependent uptake of single-stranded DNA by duplex DNA, and the ATP-dependent hybridization of homologous single-stranded DNAs. It interacts with LexA causing its activation and leading to its autocatalytic cleavage. This is Protein RecA from Paenarthrobacter aurescens (strain TC1).